A 236-amino-acid polypeptide reads, in one-letter code: MKSSLRIQSTLGLLFRPCAVSAPATAPGLNAHARWAHKTAAQLPLIPKPTPFVPDVPTFLTLIGRDLKQHADKFPTWEALFTLTTDQLRELGVEPPRARRYLLRWRQRFREGKFGIGGDLKHVENGVAYLKIHEKEASPTRTSRRVVNVPANQHVEEVSEGERVKVKGYKVKGVSTIVGPYALPVQKGVAKLAVTEGMWEDKRGHKVDGGERRRAEVRFKRGVAERKALREKMGFY.

It belongs to the mitochondrion-specific ribosomal protein mS41 family. Component of the mitochondrial small ribosomal subunit (mt-SSU). Mature N.crassa 74S mitochondrial ribosomes consist of a small (37S) and a large (54S) subunit. The 37S small subunit contains a 16S ribosomal RNA (16S mt-rRNA) and 32 different proteins. The 54S large subunit contains a 23S rRNA (23S mt-rRNA) and 42 different proteins.

The protein resides in the mitochondrion. Component of the mitochondrial ribosome (mitoribosome), a dedicated translation machinery responsible for the synthesis of mitochondrial genome-encoded proteins, including at least some of the essential transmembrane subunits of the mitochondrial respiratory chain. The mitoribosomes are attached to the mitochondrial inner membrane and translation products are cotranslationally integrated into the membrane. The polypeptide is Small ribosomal subunit protein mS41 (fyv4) (Neurospora crassa (strain ATCC 24698 / 74-OR23-1A / CBS 708.71 / DSM 1257 / FGSC 987)).